The following is a 265-amino-acid chain: Shikimate dehydrogenase (NADP(+)) (265 aa).

Shikimate contacts are provided by residues 15 to 17 (SLS) and threonine 62. Lysine 66 functions as the Proton acceptor in the catalytic mechanism. Shikimate contacts are provided by asparagine 87 and aspartate 102. NADP(+) is bound by residues 125–129 (GAGGA), 149–154 (NRTLEK), and leucine 209. Tyrosine 211 contributes to the shikimate binding site. Glycine 233 provides a ligand contact to NADP(+).

The protein belongs to the shikimate dehydrogenase family. In terms of assembly, homodimer.

It carries out the reaction shikimate + NADP(+) = 3-dehydroshikimate + NADPH + H(+). Its pathway is metabolic intermediate biosynthesis; chorismate biosynthesis; chorismate from D-erythrose 4-phosphate and phosphoenolpyruvate: step 4/7. Its function is as follows. Involved in the biosynthesis of the chorismate, which leads to the biosynthesis of aromatic amino acids. Catalyzes the reversible NADPH linked reduction of 3-dehydroshikimate (DHSA) to yield shikimate (SA). This is Shikimate dehydrogenase (NADP(+)) from Legionella pneumophila (strain Corby).